The primary structure comprises 317 residues: Carbonic anhydrase 5B, mitochondrial (317 aa).

The transit peptide at 1 to 33 (MVVMNSLRVILQASPGKLLWRKFQIPRFMPARP) directs the protein to the mitochondrion. Residues 37–296 (YTCTYKTRNR…LMNRTVRSSF (260 aa)) enclose the Alpha-carbonic anhydrase domain. Zn(2+) is bound by residues His130, His132, and His155. 235–236 (TT) is a substrate binding site.

It belongs to the alpha-carbonic anhydrase family. Requires Zn(2+) as cofactor. In terms of tissue distribution, strongest expression in heart, pancreas, kidney, placenta, lung, and skeletal muscle. Not expressed in liver.

The protein localises to the mitochondrion. It catalyses the reaction hydrogencarbonate + H(+) = CO2 + H2O. Its activity is regulated as follows. Inhibited by coumarins, sulfonamide derivatives such as acetazolamide (AZA), saccharin and Foscarnet (phosphonoformate trisodium salt). In terms of biological role, mitochondrial carbonic anhydrase that catalyzes the reversible conversion of carbon dioxide to bicarbonate/HCO3. The sequence is that of Carbonic anhydrase 5B, mitochondrial (CA5B) from Homo sapiens (Human).